The chain runs to 332 residues: Small ribosomal subunit protein uS2 (332 aa).

Belongs to the universal ribosomal protein uS2 family.

The sequence is that of Small ribosomal subunit protein uS2 from Afipia carboxidovorans (strain ATCC 49405 / DSM 1227 / KCTC 32145 / OM5) (Oligotropha carboxidovorans).